The following is a 425-amino-acid chain: Probable G-protein coupled receptor 63 (425 aa).

At 1–87 (MVVSGVLTAP…VFKSLNLAVQ (87 aa)) the chain is on the extracellular side. N22, N34, and N68 each carry an N-linked (GlcNAc...) asparagine glycan. The chain crosses the membrane as a helical span at residues 88–112 (IILSAIMIFILFVSFLGNLVVCLMV). Residues 113–123 (YQKAAMRSAIN) are Cytoplasmic-facing. The helical transmembrane segment at 124–148 (ILLASLAFADMLLAVLNMPFALVTI) threads the bilayer. Topologically, residues 149 to 165 (LTTRWIFGKFFCRLSAM) are extracellular. Residues 166 to 190 (FFWLFVIEGVAILLIISIDRFLIIV) traverse the membrane as a helical segment. Over 191–202 (QRQDKLNPYRAK) the chain is Cytoplasmic. A helical transmembrane segment spans residues 203–222 (VLIAVSWATAFSVAFPLAVG). Residues 223–247 (NPDLQIPSRAPQCVFGYTTNSGYQA) are Extracellular-facing. The helical transmembrane segment at 248–272 (YVILISLISFFIPFLVILYSFMGIL) threads the bilayer. Residues 273–321 (NTLRHNALRIHSYPEGICLSQASKLGLMSLQRPFQMSIDMGFKTRAFTT) lie on the Cytoplasmic side of the membrane. Residues 322–345 (ILILFAVFIVCWAPFTTYSLVATF) form a helical membrane-spanning segment. At 346–357 (SKHFYYQHNFFE) the chain is on the extracellular side. A helical membrane pass occupies residues 358–379 (ISTWLLWLCYLKSALNPLIYYW). Topologically, residues 380–425 (RIKKFHDACLDMMPKSFKFLPRLPGHTRRRIRPSAVYVCGEHRTVL) are cytoplasmic.

It belongs to the G-protein coupled receptor 1 family. As to expression, brain specific.

Its subcellular location is the cell membrane. Its function is as follows. Orphan receptor. May play a role in brain function. The chain is Probable G-protein coupled receptor 63 (Gpr63) from Mus musculus (Mouse).